Reading from the N-terminus, the 332-residue chain is 2,3-diketo-L-gulonate reductase (332 aa).

Histidine 44 serves as the catalytic Proton donor. Residues 168–174 (ITMVDMS), 224–225 (WK), and 304–306 (GHE) each bind NAD(+).

This sequence belongs to the LDH2/MDH2 oxidoreductase family. DlgD subfamily. Homodimer.

It is found in the cytoplasm. The catalysed reaction is 3-dehydro-L-gulonate + NAD(+) = 2,3-dioxo-L-gulonate + NADH + H(+). It carries out the reaction 3-dehydro-L-gulonate + NADP(+) = 2,3-dioxo-L-gulonate + NADPH + H(+). Catalyzes the reduction of 2,3-diketo-L-gulonate in the presence of NADH, to form 3-keto-L-gulonate. This is 2,3-diketo-L-gulonate reductase from Escherichia coli O8 (strain IAI1).